The chain runs to 798 residues: Integrin beta-1 (798 aa).

Positions 1 to 20 (MNLQLIFWIGLISSVCYVFG) are cleaved as a signal peptide. Residues 21–728 (QADENRCLKA…ETPECPTGPD (708 aa)) lie on the Extracellular side of the membrane. One can recognise a PSI domain in the interval 26–76 (RCLKANAKSCGECIQAGPNCGWCTNSTFLQEGMPTSARCDDLEALRKKGCH). 28 cysteine pairs are disulfide-bonded: C27/C45, C35/C464, C38/C64, C48/C75, C207/C213, C261/C301, C401/C415, C435/C462, C466/C486, C477/C489, C491/C500, C502/C533, C516/C531, C525/C536, C538/C553, C555/C576, C560/C574, C568/C579, C581/C590, C592/C615, C599/C613, C607/C618, C620/C630, C633/C636, C640/C691, C646/C665, C649/C661, and C699/C723. N-linked (GlcNAc...) asparagine glycosylation occurs at N50. Positions 75-84 (CHPDDIENPR) are enriched in basic and acidic residues. The tract at residues 75-107 (CHPDDIENPRGSKNIKKNKNVTNRSKGTAEKLQ) is disordered. N94 and N97 each carry an N-linked (GlcNAc...) asparagine glycan. Residues 140 to 378 (DYPIDLYYLM…QLIIDAYNSL (239 aa)) form the VWFA domain. The Mg(2+) site is built by S152 and S154. Ca(2+)-binding residues include S154, D157, D158, and E189. A CX3CL1-binding region spans residues 207–213 (CTSEQNC). An N-linked (GlcNAc...) asparagine glycan is attached at N212. The Ca(2+) site is built by N244, D246, P248, and E249. Position 249 (E249) interacts with Mg(2+). N-linked (GlcNAc...) asparagine glycosylation is present at N269. Positions 295 to 314 (LPNDGHCHLENDVYTMSHYY) are CX3CL1-binding. A362 serves as a coordination point for Ca(2+). 3 N-linked (GlcNAc...) asparagine glycosylation sites follow: N363, N406, and N417. The interval 383–465 (ILENSKLPEG…IILQFICECE (83 aa)) is interaction with TMEM182. I-EGF domains follow at residues 466 to 501 (CQSE…RHCE), 502 to 554 (CSTD…KFCE), 555 to 591 (CDNF…SACD), and 592 to 631 (CSLD…PTCE). N481 is a glycosylation site (N-linked (GlcNAc...) asparagine). N520 carries an N-linked (GlcNAc...) asparagine glycan. A glycan (N-linked (GlcNAc...) asparagine) is linked at N584. An N-linked (GlcNAc...) asparagine glycan is attached at N669. The chain crosses the membrane as a helical span at residues 729–749 (IIPIVAGVVAGIVLIGLALLL). Over 750–798 (IWKLLMIIHDRREFAKFEKEKMNAKWDTGENPIYKSAVTTVVNPKYEGK) the chain is Cytoplasmic. The segment at 762–767 (EFAKFE) is signal for sorting from recycling endosomes; interaction with ACAP1. The residue at position 777 (T777) is a Phosphothreonine. At Y783 the chain carries Phosphotyrosine. S785 bears the Phosphoserine mark. Residues 785-792 (SAVTTVVN) are interaction with ITGB1BP1. T789 is subject to Phosphothreonine. At K794 the chain carries N6-acetyllysine; alternate. K794 is covalently cross-linked (Glycyl lysine isopeptide (Lys-Gly) (interchain with G-Cter in SUMO1); alternate).

It belongs to the integrin beta chain family. Interacts with seprase FAP (seprase); the interaction occurs at the cell surface of invadopodia membrane in a collagen-dependent manner. Heterodimer of an alpha and a beta subunit. Beta-1 associates with either alpha-1, alpha-2, alpha-3, alpha-4, alpha-5, alpha-6, alpha-7, alpha-8, alpha-9, alpha-10, alpha-11 or alpha-V. ITGA6:ITGB1 is found in a complex with CD9; interaction takes place in oocytes and is involved in sperm-egg fusion. Binds LGALS3BP and NMRK2, when associated with alpha-7, but not with alpha-5. Interacts with FLNA, FLNB, FLNC and RANBP9. Interacts with KRT1 in the presence of RACK1 and SRC. Interacts with JAML; integrin alpha-4/beta-1 may regulate leukocyte to endothelial cells adhesion by controlling JAML homodimerization. Interacts with RAB21. Interacts (via the cytoplasmic region) with RAB25 (via the hypervariable C-terminal region). Interacts with MYO10. Interacts with ITGB1BP1 (via C-terminal region); the interaction is a prerequisite for focal adhesion disassembly. Interacts with TLN1; the interaction is prevented by competitive binding of ITGB1BP1. Interacts with ACAP1; required for ITGB1 recycling. Interacts with ASAP3. Interacts with FERMT2; the interaction is inhibited in presence of ITGB1BP1. Interacts with DAB2. Interacts with FGR and HCK. Interacts with alpha-7A and alpha-7B in adult skeletal muscle. Interacts with alpha-7B in cardiomyocytes of adult heart. Interacts with EMP2; the interaction may be direct or indirect and ITGB1 has a heterodimer form. ITGA5:ITGB1 interacts with CCN3. ITGA4:ITGB1 is found in a ternary complex with CX3CR1 and CX3CL1. ITGA5:ITGB1 interacts with FBN1. ITGA5:ITGB1 interacts with IL1B. Interacts with MDK. ITGA4:ITGB1 interacts with MDK; this interaction mediates MDK-induced osteoblast cells migration through PXN phosphorylation. ITGA6:ITGB1 interacts with MDK; this interaction mediates MDK-induced neurite-outgrowth. ITGA5:ITGB1 interacts with ACE2. Interacts with TMEM182 and LAMB1. Interacts with tensin TNS3; TNS3 also interacts with PEAK1, thus acting as an adapter molecule to bridge the association of PEAK1 with ITGB1. Interacts with tensin TNS4; the interaction displaces tensin TNS3 from the ITGB1 cytoplasmic tail and promotes ITGB1 stability. Integrin ITGA9:ITGB1 interacts with SPP1/OPN (via N-terminus). Integrin ITGA9:ITGB1 interacts with TNC/TNFN3 (via the 3rd Fibronectin type-III domain). Integrins ITGA4:ITGB1 and ITGA9:ITGB1 interact with SVEP1 (via Sushi domain 21); thereby inhibit Ca(2+) intracellular signaling and as a result repress vasocontraction. ITGA4:ITGB1 and ITGA5:ITGB1 interacts with SELP. Interacts with CD248. ITGA5:ITGB1 interacts with IGFBP1. ITGA4:ITGB1 interacts with BCAM. Interacts with ADGRG6. Expressed in the spleen, thymus, alveolar macrophages, bone marrow, liver and kidney.

It localises to the cell membrane. It is found in the cell projection. The protein localises to the invadopodium membrane. The protein resides in the ruffle membrane. Its subcellular location is the recycling endosome. It localises to the melanosome. It is found in the lamellipodium. The protein localises to the ruffle. The protein resides in the cell junction. Its subcellular location is the focal adhesion. Functionally, integrins alpha-1/beta-1, alpha-2/beta-1, alpha-10/beta-1 and alpha-11/beta-1 are receptors for collagen. Integrins alpha-1/beta-1 and alpha-2/beta-2 recognize the proline-hydroxylated sequence G-F-P-G-E-R in collagen. Integrins alpha-2/beta-1, alpha-3/beta-1, alpha-4/beta-1, alpha-5/beta-1, alpha-8/beta-1, alpha-10/beta-1, alpha-11/beta-1 and alpha-V/beta-1 are receptors for fibronectin. Alpha-4/beta-1 recognizes one or more domains within the alternatively spliced CS-1 and CS-5 regions of fibronectin. Integrin alpha-5/beta-1 is a receptor for fibrinogen. Integrin alpha-1/beta-1, alpha-2/beta-1, alpha-6/beta-1 and alpha-7/beta-1 are receptors for lamimin. Integrin alpha-6/beta-1 (ITGA6:ITGB1) is present in oocytes and is involved in sperm-egg fusion. Integrin alpha-4/beta-1 is a receptor for VCAM1 and recognizes the sequence Q-I-D-S in VCAM1. Integrin alpha-9/beta-1 is a receptor for VCAM1, cytotactin and osteopontin. It recognizes the sequence A-E-I-D-G-I-E-L in cytotactin. Integrin alpha-3/beta-1 is a receptor for epiligrin, thrombospondin and CSPG4. Integrin alpha-3/beta-1 provides a docking site for FAP (seprase) at invadopodia plasma membranes in a collagen-dependent manner and hence may participate in the adhesion, formation of invadopodia and matrix degradation processes, promoting cell invasion. Alpha-3/beta-1 may mediate with LGALS3 the stimulation by CSPG4 of endothelial cells migration. Integrin alpha-V/beta-1 is a receptor for vitronectin. Beta-1 integrins recognize the sequence R-G-D in a wide array of ligands. When associated with alpha-7/beta-1 integrin, regulates cell adhesion and laminin matrix deposition. Involved in promoting endothelial cell motility and angiogenesis. Involved in osteoblast compaction through the fibronectin fibrillogenesis cell-mediated matrix assembly process and the formation of mineralized bone nodules. May be involved in up-regulation of the activity of kinases such as PKC via binding to KRT1. Together with KRT1 and RACK1, serves as a platform for SRC activation or inactivation. Plays a mechanistic adhesive role during telophase, required for the successful completion of cytokinesis. ITGA4:ITGB1 binds to fractalkine (CX3CL1) and may act as its coreceptor in CX3CR1-dependent fractalkine signaling. ITGA4:ITGB1 and ITGA5:ITGB1 bind to PLA2G2A via a site (site 2) which is distinct from the classical ligand-binding site (site 1) and this induces integrin conformational changes and enhanced ligand binding to site 1. ITGA5:ITGB1 acts as a receptor for fibrillin-1 (FBN1) and mediates R-G-D-dependent cell adhesion to FBN1. ITGA5:ITGB1 acts as a receptor for fibronectin FN1 and mediates R-G-D-dependent cell adhesion to FN1. ITGA5:ITGB1 is a receptor for IL1B and binding is essential for IL1B signaling. ITGA5:ITGB3 is a receptor for soluble CD40LG and is required for CD40/CD40LG signaling. Plays an important role in myoblast differentiation and fusion during skeletal myogenesis. ITGA9:ITGB1 may play a crucial role in SVEP1/polydom-mediated myoblast cell adhesion. Integrins ITGA9:ITGB1 and ITGA4:ITGB1 repress PRKCA-mediated L-type voltage-gated channel Ca(2+) influx and ROCK-mediated calcium sensitivity in vascular smooth muscle cells via their interaction with SVEP1, thereby inhibit vasocontraction. The polypeptide is Integrin beta-1 (ITGB1) (Sus scrofa (Pig)).